The chain runs to 58 residues: Small ribosomal subunit protein bS21 (58 aa).

Residues Val-28–Phe-58 are disordered. Basic and acidic residues predominate over residues Asp-31–Ser-42. Positions Ile-43–Phe-58 are enriched in basic residues.

It belongs to the bacterial ribosomal protein bS21 family.

This Syntrophomonas wolfei subsp. wolfei (strain DSM 2245B / Goettingen) protein is Small ribosomal subunit protein bS21.